Here is a 352-residue protein sequence, read N- to C-terminus: Cuticle collagen dpy-17 (352 aa).

Positions 1 to 29 (MSVFAGYAACTLGAVSMLLCVSLVPQVYQ) are cleaved as a signal peptide. The segment at 61–64 (RVRR) is furin-like endopeptidase recognition region. 2 disordered regions span residues 73-143 (GGYG…GPGD) and 156-352 (GPAG…GYRN). Over residues 87-97 (GPHGGFPGGPQ) the composition is skewed to gly residues. Triple-helical region stretches follow at residues 156 to 182 (GPAG…DGED), 202 to 264 (GPQG…DVEH), 267 to 290 (GLPG…QGDR), and 294 to 329 (GIAG…PGQD). Positions 202–259 (GPQGPPGSQGKPGARGMRGARGQAAMPGRDGSPGMPGSLGPIGPPGAAGEEGPTGEPG) constitute a Collagen-like domain. Residues 207 to 259 (PGSQGKPGARGMRGARGQAAMPGRDGSPGMPGSLGPIGPPGAAGEEGPTGEPG) are compositionally biased toward low complexity. Residues 337–352 (QRNTNAAVSGNQGYRN) show a composition bias toward polar residues.

This sequence belongs to the cuticular collagen family. Collagen polypeptide chains are complexed within the cuticle by disulfide bonds and other types of covalent cross-links.

Its subcellular location is the secreted. It is found in the extracellular space. Secreted collagen that forms part of the nematode cuticle, which functions as an exoskeleton and a barrier to protect the worm from its environment. Secretion and subsequent incorporation into the cuticle is likely mediated by bli-4, which probably cleaves at the N-terminal consensus furin cleavage site. The polypeptide is Cuticle collagen dpy-17 (Caenorhabditis elegans).